The chain runs to 145 residues: MLMPKRVKYRREHRGKMRGRAKGGTEVHFGEFGLQALEASWITNRQIEAARIAMTRYMKRGGKVWIKIFPSKPYTAKPLEVRMGSGKGAPEGWVAVVKPGKIMFEISGVSEEVAREALRLASHKLPIKCKFVKREEVGGDSNESN.

The protein belongs to the universal ribosomal protein uL16 family. As to quaternary structure, part of the 50S ribosomal subunit.

Binds 23S rRNA and is also seen to make contacts with the A and possibly P site tRNAs. The polypeptide is Large ribosomal subunit protein uL16 (Shouchella clausii (strain KSM-K16) (Alkalihalobacillus clausii)).